A 525-amino-acid polypeptide reads, in one-letter code: Peptide chain release factor 3 (525 aa).

The tr-type G domain occupies 9–276 (AKRRTFAIIS…GFTRYAPAPQ (268 aa)). Residues 18-25 (SHPDAGKT), 86-90 (DTPGH), and 140-143 (NKFD) contribute to the GTP site.

Belongs to the TRAFAC class translation factor GTPase superfamily. Classic translation factor GTPase family. PrfC subfamily.

The protein localises to the cytoplasm. Increases the formation of ribosomal termination complexes and stimulates activities of RF-1 and RF-2. It binds guanine nucleotides and has strong preference for UGA stop codons. It may interact directly with the ribosome. The stimulation of RF-1 and RF-2 is significantly reduced by GTP and GDP, but not by GMP. The polypeptide is Peptide chain release factor 3 (Francisella tularensis subsp. tularensis (strain FSC 198)).